A 1479-amino-acid polypeptide reads, in one-letter code: Peroxidasin homolog (1479 aa).

The N-terminal stretch at 1–26 (MAKRSRGPGRRCLLALVLFCAWGTLA) is a signal peptide. Positions 27–63 (VVAQKPGAGCPSRCLCFRTTVRCMHLLLEAVPAVAPQ) constitute an LRRNT domain. Intrachain disulfides connect cysteine 36-cysteine 42 and cysteine 40-cysteine 49. LRR repeat units follow at residues 61–84 (APQTSILDLRFNRIREIQPGAFRR), 85–108 (LRNLNTLLLNNNQIKRIPSGAFED), 110–132 (ENLKYLYLYKNEIQSIDRQAFKG), 133–156 (LASLEQLYLHFNQIETLDPDSFQH), 157–180 (LPKLERLFLHNNRITHLVPGTFNH), and 182–204 (ESMKRLRLDSNTLHCDCEILWLA). The LRRCT domain maps to 192 to 244 (NTLHCDCEILWLADLLKTYAESGNAQAAAICEYPRRIQGRSVATITPEELNCE). Disulfide bonds link cysteine 196/cysteine 243, cysteine 198/cysteine 222, cysteine 267/cysteine 317, cysteine 363/cysteine 412, cysteine 454/cysteine 502, and cysteine 546/cysteine 594. 4 Ig-like C2-type domains span residues 246 to 332 (PRIT…QEVT), 342 to 428 (PTFV…AFII), 433 to 520 (PQFT…LTVQ), and 521 to 610 (PRVT…MVLS). Asparagine 640, asparagine 699, asparagine 719, and asparagine 731 each carry an N-linked (GlcNAc...) asparagine glycan. Cystine bridges form between cysteine 723–cysteine 885, cysteine 732–cysteine 748, cysteine 847–cysteine 857, and cysteine 851–cysteine 875. Heme b is bound at residue aspartate 826. The active-site Proton acceptor is the histidine 827. Position 828 (aspartate 828) interacts with Ca(2+). Residue asparagine 865 is glycosylated (N-linked (GlcNAc...) asparagine). Positions 907, 909, 911, and 913 each coordinate Ca(2+). The cysteines at positions 959 and 970 are disulfide-linked. Asparagine 964 is a glycosylation site (N-linked (GlcNAc...) asparagine). Heme b-binding residues include glutamate 980 and histidine 1074. An LRR 7 repeat occupies 1151–1175 (ALDLAAINIQRGRDHGIPPYHDYRV). At tyrosine 1176 the chain carries Phosphotyrosine. 2 disulfides stabilise this stretch: cysteine 1177-cysteine 1234 and cysteine 1275-cysteine 1301. Residue asparagine 1178 is glycosylated (N-linked (GlcNAc...) asparagine). Serine 1180 is modified (phosphoserine). Residues 1270-1291 (LARILCDNADNITRVQSDVFRV) form an LRR 8 repeat. N-linked (GlcNAc...) asparagine glycosylation is found at asparagine 1280, asparagine 1368, and asparagine 1425. Positions 1315 to 1411 (CCEDCRTRGQ…QIKKLESRLS (97 aa)) are required in homotrimerization. The interval 1342-1380 (YQEDKPTKKTRPRKIPSVGRQGEHLSNSTSAFSTRSDAS) is disordered. Residues 1365–1380 (HLSNSTSAFSTRSDAS) show a composition bias toward polar residues. The region spanning 1413 to 1471 (TECVDAGGESHANNTKWKKDACTICECKDGQVTCFVEACPPATCAVPVNIPGACCPVCL) is the VWFC domain.

Belongs to the peroxidase family. XPO subfamily. As to quaternary structure, homotrimer; disulfide-linked. The homotrimer form is predominant. Homooligomer; disulfide-linked. Oligomerization occurs intracellularly before C-terminal proteolytic cleavage. Interacts with PXDNL; this interaction inhibits the peroxidase activity of PXDN. It depends on Ca(2+) as a cofactor. The cofactor is heme b. Post-translationally, glycosylated. Four sites are completely N-glycosylated (Asn-640, Asn-731, Asn-865 and Asn-1425), whereas the others are found partially glycosylated. Processed by FURIN and the proteolytic processing largely depends on the peroxidase activity of PXDN. The proteolytic cleavage occurs after intracellular homotrimerization and releases into the extracellular matrix a large, catalytically active fragment and a smaller fragment consisting primarily of the C-terminal VWFC domain. The processing enhances both peroxidase activity and sulfilimine cross-links formation. In terms of tissue distribution, expressed at higher levels in heart, lung, ovary, spleen, intestine and placenta, and at lower levels in liver, colon, pancreas, kidney, thymus, skeletal muscle and prostate. Expressed in tumors such as melanoma, breast cancer, ovarian cancer and glioblastoma. A shorter form probably lacking the signal sequence is found in testis and in EB1 cells undergoing p53/TP53-dependent apoptosis.

Its subcellular location is the secreted. It is found in the extracellular space. The protein localises to the extracellular matrix. The protein resides in the endoplasmic reticulum. It localises to the cell surface. Its subcellular location is the basement membrane. It catalyses the reaction L-lysyl-[collagen] + L-methionyl-[collagen] + H2O2 = [collagen]-L-lysyl-N-S-L-methionyl-[collagen] + 2 H2O + H(+). The catalysed reaction is bromide + H2O2 = hypobromite + H2O. It carries out the reaction L-lysyl-[collagen] + L-methionyl-[collagen] + hypobromite = [collagen]-L-lysyl-N-S-L-methionyl-[collagen] + bromide + H2O + H(+). The enzyme catalyses L-tyrosyl-[protein] + bromide + H2O2 + H(+) = 3-bromo-L-tyrosyl-[protein] + 2 H2O. It catalyses the reaction hypobromite + L-tyrosyl-[protein] + H(+) = 3-bromo-L-tyrosyl-[protein] + H2O. Its activity is regulated as follows. The hypobromous acid formation is activated by increasing nitrite concentrations and inhibited by increasing urate concentrations. In terms of biological role, catalyzes the two-electron oxidation of bromide by hydrogen peroxide and generates hypobromite as a reactive intermediate which mediates the formation of sulfilimine cross-links between methionine and hydroxylysine residues within an uncross-linked collagen IV/COL4A1 NC1 hexamer. In turns, directly contributes to the collagen IV network-dependent fibronectin/FN and laminin assembly, which is required for full extracellular matrix (ECM)-mediated signaling. Thus, sulfilimine cross-links are essential for growth factor-induced cell proliferation and survival in endothelial cells, an event essential to basement membrane integrity. In addition, through the bromide oxidation, may promote tubulogenesis and induce angiogenesis through ERK1/2, Akt, and FAK pathways. Moreover brominates alpha2 collagen IV chain/COL4A2 at 'Tyr-1485' and leads to bromine enrichment of the basement membranes. In vitro, can also catalyze the two-electron oxidation of thiocyanate and iodide and these two substrates could effectively compete with bromide and thus inhibit the formation of sulfilimine bonds. Binds laminins. May play a role in the organization of eyeball structure and lens development during eye development. The chain is Peroxidasin homolog from Homo sapiens (Human).